We begin with the raw amino-acid sequence, 458 residues long: Histone acetyltransferase Tip60 homolog (458 aa).

Residues 1-24 are disordered; sequence MTEPKKEIIEDENHGISKKIPTDP. Positions 30 to 86 constitute a Tudor-knot domain; the sequence is VTEGCRLLVMMASQEEERWAEVISRCRAANGSIKFYVHYIDCNRRLDEWVQSDRLNL. The tract at residues 94-123 is disordered; the sequence is KGGKKGAHLREENRDSNENEGKKSGRKRKI. A compositionally biased stretch (basic and acidic residues) spans 101–116; it reads HLREENRDSNENEGKK. Residues 168–446 enclose the MYST-type HAT domain; that stretch reads TRIRNVECIE…INPAALQWRP (279 aa). A C2HC MYST-type zinc finger spans residues 201–226; the sequence is IYICEFCLKYLKSKTCLKRHMEKCAM. Residue K268 is modified to N6-acetyllysine; by autocatalysis. Acetyl-CoA contacts are provided by residues 311 to 313 and 318 to 324; these read ILV and QKKGYGS. Residue E344 is the Proton donor/acceptor of the active site. Acetyl-CoA is bound by residues S348 and S357.

Belongs to the MYST (SAS/MOZ) family. In terms of assembly, interacts with transcription-associated protein trr-1. Probably a component of a complex with histone acetyltransferase (HAT) activity, at least composed of mys-1 and trr-1. In terms of processing, autoacetylation at Lys-268 is required for binding histones with high affinity and for proper function.

It localises to the nucleus. It carries out the reaction L-lysyl-[protein] + acetyl-CoA = N(6)-acetyl-L-lysyl-[protein] + CoA + H(+). Its function is as follows. Probable catalytic subunit of the Tip60 chromatin-remodeling complex. Plays a role in acetylation of nucleosomal histone H4 and perhaps also H2A, probably acting as a component of the Tip60 histone acetyltransferase complex. Acts in the determination of vulval and distal tip cell (DTC) precursor cell fates. Involved in the positive regulation of transcription factor daf-16, probably acting by histone acetylation; thereby modulating stress resistance. This chain is Histone acetyltransferase Tip60 homolog, found in Caenorhabditis elegans.